Consider the following 462-residue polypeptide: PTS system mannitol-specific cryptic EIICB component (462 aa).

The Cytoplasmic portion of the chain corresponds to 1–24 (MENKSARAKVQAFGGFLTAMVIPN). A PTS EIIC type-2 domain is found at 13–344 (FGGFLTAMVI…LKMEKTVETE (332 aa)). The chain crosses the membrane as a helical span at residues 25–46 (IGAFIAWGFITALFIPTGWLPN). Residues 47 to 50 (EHFA) lie on the Periplasmic side of the membrane. The helical transmembrane segment at 51–71 (KIVGPMITYLLPVMIGSTGGH) threads the bilayer. Topologically, residues 72 to 134 (LVGGKRGAVM…AGFEMVINNF (63 aa)) are cytoplasmic. The chain crosses the membrane as a helical span at residues 135-156 (SLGIAGMLLCLLGFEVIGPAVL). The Periplasmic segment spans residues 157-165 (IANTFVKEC). The helical transmembrane segment at 166-186 (IEALVHAGYLPLLSVINEPAK) threads the bilayer. Over 187-273 (VLFLNNAIDQ…VLMKPLTIIA (87 aa)) the chain is Cytoplasmic. Residues 274–293 (MIAGGMSGTWMFNLLDGGLV) form a helical membrane-spanning segment. Topologically, residues 294–313 (AGPSPGSIFAYLALTPKGSF) are periplasmic. A helical transmembrane segment spans residues 314–335 (LATIAGVTVGTLVSFAITSLIL). The Cytoplasmic portion of the chain corresponds to 336–462 (KMEKTVETES…FNQLTAEHKH (127 aa)). The PTS EIIB type-2 domain maps to 371-461 (KRIAFVCDAG…LFNQLTAEHK (91 aa)). Cysteine 377 serves as the catalytic Phosphocysteine intermediate; for EIIB activity. A Phosphocysteine; by EIIA modification is found at cysteine 377.

Its subcellular location is the cell inner membrane. It catalyses the reaction D-mannitol(out) + N(pros)-phospho-L-histidyl-[protein] = D-mannitol 1-phosphate(in) + L-histidyl-[protein]. Functionally, the phosphoenolpyruvate-dependent sugar phosphotransferase system (sugar PTS), a major carbohydrate active transport system, catalyzes the phosphorylation of incoming sugar substrates concomitantly with their translocation across the cell membrane. The enzyme II CmtAB PTS system is involved in D-mannitol transport. This is PTS system mannitol-specific cryptic EIICB component (cmtA) from Escherichia coli O157:H7.